A 360-amino-acid polypeptide reads, in one-letter code: Cyclin-D1-binding protein 1 (360 aa).

Residue alanine 2 is modified to N-acetylalanine. Interaction with TCF3 regions lie at residues 2 to 184 (ASAT…VDFV) and 150 to 360 (ISYN…ELEL). Interaction with RPLP0 stretches follow at residues 2–190 (ASAT…AHEE) and 240–360 (LIIP…ELEL). A required for interaction with CCND1 region spans residues 2–208 (ASATAPAAAV…DPYSGLLNDT (207 aa)).

The protein belongs to the CCNDBP1 family. In terms of assembly, interacts with CCND1 and GRAP2. May also interact with COPS5, RPLP0, SIRT6, SYF2 and TCF3. Phosphorylated. Ubiquitously expressed. Expression is down-regulated in a variety of tumor types including breast, colon, prostate and rectal tumors, and is up-regulated in certain hepatic carcinomas.

It localises to the cytoplasm. Its subcellular location is the nucleus. Functionally, may negatively regulate cell cycle progression. May act at least in part via inhibition of the cyclin-D1/CDK4 complex, thereby preventing phosphorylation of RB1 and blocking E2F-dependent transcription. The polypeptide is Cyclin-D1-binding protein 1 (CCNDBP1) (Homo sapiens (Human)).